Consider the following 376-residue polypeptide: Alanine racemase 1 (376 aa).

Lys40 functions as the Proton acceptor; specific for D-alanine in the catalytic mechanism. N6-(pyridoxal phosphate)lysine is present on Lys40. Arg138 is a binding site for substrate. The active-site Proton acceptor; specific for L-alanine is the Tyr268. Met316 serves as a coordination point for substrate.

The protein belongs to the alanine racemase family. Pyridoxal 5'-phosphate serves as cofactor.

It catalyses the reaction L-alanine = D-alanine. The protein operates within amino-acid biosynthesis; D-alanine biosynthesis; D-alanine from L-alanine: step 1/1. In terms of biological role, catalyzes the interconversion of L-alanine and D-alanine. May also act on other amino acids. This chain is Alanine racemase 1 (alr1), found in Oceanobacillus iheyensis (strain DSM 14371 / CIP 107618 / JCM 11309 / KCTC 3954 / HTE831).